Consider the following 219-residue polypeptide: Glucagon-2 (219 aa).

An N-terminal signal peptide occupies residues 1 to 20 (MKSTCYMIGILLLILQNTYQ). Propeptides lie at residues 21-50 (SPVP…LKEV), 84-95 (SGGLSRRNADYE), 136-140 (NAEIE), 175-178 (IRYS), and 213-219 (KDLLEEH). The interval 23-43 (VPEADGSSRSVKAARNEAVDD) is disordered.

Belongs to the glucagon family.

Its subcellular location is the secreted. Its function is as follows. Promotes hydrolysis of glycogen and lipids, and raises the blood sugar level. The sequence is that of Glucagon-2 (gcg2) from Xenopus laevis (African clawed frog).